A 426-amino-acid chain; its full sequence is Serine--tRNA ligase (426 aa).

233-235 is a binding site for L-serine; sequence TAE. Residue 264–266 coordinates ATP; that stretch reads RRE. Glu-287 provides a ligand contact to L-serine. 351-354 provides a ligand contact to ATP; sequence EISS. Ser-386 contacts L-serine.

This sequence belongs to the class-II aminoacyl-tRNA synthetase family. Type-1 seryl-tRNA synthetase subfamily. As to quaternary structure, homodimer. The tRNA molecule binds across the dimer.

The protein localises to the cytoplasm. The enzyme catalyses tRNA(Ser) + L-serine + ATP = L-seryl-tRNA(Ser) + AMP + diphosphate + H(+). It carries out the reaction tRNA(Sec) + L-serine + ATP = L-seryl-tRNA(Sec) + AMP + diphosphate + H(+). It functions in the pathway aminoacyl-tRNA biosynthesis; selenocysteinyl-tRNA(Sec) biosynthesis; L-seryl-tRNA(Sec) from L-serine and tRNA(Sec): step 1/1. Catalyzes the attachment of serine to tRNA(Ser). Is also able to aminoacylate tRNA(Sec) with serine, to form the misacylated tRNA L-seryl-tRNA(Sec), which will be further converted into selenocysteinyl-tRNA(Sec). The chain is Serine--tRNA ligase from Prochlorococcus marinus (strain NATL2A).